The chain runs to 235 residues: Phosphoribosylaminoimidazole-succinocarboxamide synthase (235 aa).

This sequence belongs to the SAICAR synthetase family.

It carries out the reaction 5-amino-1-(5-phospho-D-ribosyl)imidazole-4-carboxylate + L-aspartate + ATP = (2S)-2-[5-amino-1-(5-phospho-beta-D-ribosyl)imidazole-4-carboxamido]succinate + ADP + phosphate + 2 H(+). It participates in purine metabolism; IMP biosynthesis via de novo pathway; 5-amino-1-(5-phospho-D-ribosyl)imidazole-4-carboxamide from 5-amino-1-(5-phospho-D-ribosyl)imidazole-4-carboxylate: step 1/2. This Caldanaerobacter subterraneus subsp. tengcongensis (strain DSM 15242 / JCM 11007 / NBRC 100824 / MB4) (Thermoanaerobacter tengcongensis) protein is Phosphoribosylaminoimidazole-succinocarboxamide synthase.